We begin with the raw amino-acid sequence, 271 residues long: DNA repair protein RecO (271 aa).

Belongs to the RecO family.

Functionally, involved in DNA repair and RecF pathway recombination. This is DNA repair protein RecO from Synechococcus sp. (strain CC9311).